The primary structure comprises 107 residues: Urease subunit beta (107 aa).

Belongs to the urease beta subunit family. In terms of assembly, heterotrimer of UreA (gamma), UreB (beta) and UreC (alpha) subunits. Three heterotrimers associate to form the active enzyme.

It localises to the cytoplasm. It catalyses the reaction urea + 2 H2O + H(+) = hydrogencarbonate + 2 NH4(+). It functions in the pathway nitrogen metabolism; urea degradation; CO(2) and NH(3) from urea (urease route): step 1/1. In Janthinobacterium sp. (strain Marseille) (Minibacterium massiliensis), this protein is Urease subunit beta.